Here is a 127-residue protein sequence, read N- to C-terminus: Large ribosomal subunit protein bL17 (127 aa).

Belongs to the bacterial ribosomal protein bL17 family. As to quaternary structure, part of the 50S ribosomal subunit. Contacts protein L32.

This chain is Large ribosomal subunit protein bL17, found in Stenotrophomonas maltophilia (strain R551-3).